Consider the following 343-residue polypeptide: MQAIIDAEQSFKFPVLVGDIGGTNARFSILVDSNAEPKEFPVLQTADYATIDEAIQHAILDQTAIQPRSVILAVAGPVDGDEIDLTNCDWVVRPKKMIADLGFEDVTVLNDFEAQALAVVSLEGHHMEQIGGKPEEAVATRVVLGPGTGLGVAGLFRTRHAWVPVPGEGGHIDIGPRTERDYQIFPHIERIEGRVTGEQILSGRGLRNLYLGICAADKITPTLETPVDITSAGLDGSNPQAAETLDLFATYLGRLAGDLALIFMAHGGVYLSGGIPVRILSALKAGSFRATFEDKAPHKAIMRDIPVRVITYQLAALTGLSAFARTPSRFEVSTEGRRWRMRR.

18–23 (GDIGGT) contacts ATP.

Belongs to the bacterial glucokinase family.

It localises to the cytoplasm. It carries out the reaction D-glucose + ATP = D-glucose 6-phosphate + ADP + H(+). The polypeptide is Glucokinase (Brucella abortus (strain 2308)).